We begin with the raw amino-acid sequence, 393 residues long: Enoyl-[acyl-carrier-protein] reductase [NADH] (393 aa).

NAD(+) contacts are provided by residues 48-53 (GSSTGY), 74-75 (FE), 111-112 (DA), and 139-140 (LA). Tyr225 serves as a coordination point for substrate. The Proton donor role is filled by Tyr235. NAD(+) is bound by residues Lys244 and 273 to 275 (LVT).

Belongs to the TER reductase family. As to quaternary structure, monomer.

The enzyme catalyses a 2,3-saturated acyl-[ACP] + NAD(+) = a (2E)-enoyl-[ACP] + NADH + H(+). It participates in lipid metabolism; fatty acid biosynthesis. Involved in the final reduction of the elongation cycle of fatty acid synthesis (FAS II). Catalyzes the reduction of a carbon-carbon double bond in an enoyl moiety that is covalently linked to an acyl carrier protein (ACP). The protein is Enoyl-[acyl-carrier-protein] reductase [NADH] of Pseudoalteromonas atlantica (strain T6c / ATCC BAA-1087).